Reading from the N-terminus, the 664-residue chain is Probable 3',5'-cyclic phosphodiesterase pde-1 (664 aa).

2 disordered regions span residues 24-60 (TSSA…SIKI) and 113-142 (RNQK…KSYD). Composition is skewed to basic and acidic residues over residues 28-38 (SEEHGDSDKKL) and 114-130 (NQKE…EKEP). Residues 256–634 (VQCPIPPEIA…AHWKERAAKE (379 aa)) form the PDEase domain. The active-site Proton donor is His333. A divalent metal cation-binding residues include His337, His373, Asp374, and Asp480. Disordered regions lie at residues 564–597 (DSLF…TSPS) and 630–664 (RAAK…VTTN). Positions 630–644 (RAAKEEEERKIKEAA) are enriched in basic and acidic residues.

It belongs to the cyclic nucleotide phosphodiesterase family. Interacts with cmd-1 in the presence of Ca(2+). A divalent metal cation is required as a cofactor. In terms of tissue distribution, expressed in AFD thermosensory neurons.

The catalysed reaction is a nucleoside 3',5'-cyclic phosphate + H2O = a nucleoside 5'-phosphate + H(+). Its function is as follows. Redundantly with pde-5, plays a role in the AFD thermosensory neurons to regulate microvilli receptive ending morphology, possibly by regulating cGMP levels. This chain is Probable 3',5'-cyclic phosphodiesterase pde-1 (pde-1), found in Caenorhabditis elegans.